A 121-amino-acid polypeptide reads, in one-letter code: Large ribosomal subunit protein bL12 (121 aa).

It belongs to the bacterial ribosomal protein bL12 family. In terms of assembly, homodimer. Part of the ribosomal stalk of the 50S ribosomal subunit. Forms a multimeric L10(L12)X complex, where L10 forms an elongated spine to which 2 to 4 L12 dimers bind in a sequential fashion. Binds GTP-bound translation factors.

Functionally, forms part of the ribosomal stalk which helps the ribosome interact with GTP-bound translation factors. Is thus essential for accurate translation. The sequence is that of Large ribosomal subunit protein bL12 from Pectobacterium atrosepticum (strain SCRI 1043 / ATCC BAA-672) (Erwinia carotovora subsp. atroseptica).